Here is a 310-residue protein sequence, read N- to C-terminus: Protein FAM153A (310 aa).

Disordered stretches follow at residues 39–58 (LGVP…LCPP), 108–136 (QTNG…HTME), 156–184 (SYNG…DLEE), and 250–297 (TITG…KKSR). Over residues 259-268 (SASPSSAPAE) the composition is skewed to low complexity. The span at 270–282 (ATEKTKVEEEVKT) shows a compositional bias: basic and acidic residues. The segment covering 283-297 (RKPKKKTRKPSKKSR) has biased composition (basic residues).

The protein belongs to the FAM153 family.

This is Protein FAM153A (FAM153A) from Homo sapiens (Human).